The sequence spans 118 residues: Large ribosomal subunit protein uL18 (118 aa).

It belongs to the universal ribosomal protein uL18 family. In terms of assembly, part of the 50S ribosomal subunit; part of the 5S rRNA/L5/L18/L25 subcomplex. Contacts the 5S and 23S rRNAs.

Its function is as follows. This is one of the proteins that bind and probably mediate the attachment of the 5S RNA into the large ribosomal subunit, where it forms part of the central protuberance. This chain is Large ribosomal subunit protein uL18, found in Levilactobacillus brevis (strain ATCC 367 / BCRC 12310 / CIP 105137 / JCM 1170 / LMG 11437 / NCIMB 947 / NCTC 947) (Lactobacillus brevis).